A 135-amino-acid polypeptide reads, in one-letter code: Histone H2A.4 (135 aa).

It belongs to the histone H2A family. The nucleosome is a histone octamer containing two molecules each of H2A, H2B, H3 and H4 assembled in one H3-H4 heterotetramer and two H2A-H2B heterodimers. The octamer wraps approximately 147 bp of DNA. As to expression, expressed preferentially in meristematic tissues of young seedlings, in stigma and ovary but not in pollen.

It is found in the nucleus. The protein resides in the chromosome. Its function is as follows. Core component of nucleosome. Nucleosomes wrap and compact DNA into chromatin, limiting DNA accessibility to the cellular machineries which require DNA as a template. Histones thereby play a central role in transcription regulation, DNA repair, DNA replication and chromosomal stability. DNA accessibility is regulated via a complex set of post-translational modifications of histones, also called histone code, and nucleosome remodeling. In Triticum aestivum (Wheat), this protein is Histone H2A.4 (TH254).